Consider the following 339-residue polypeptide: tRNA-specific 2-thiouridylase MnmA (339 aa).

Residues 8-15 (AMSGGVDS) and methionine 34 each bind ATP. Cysteine 94 acts as the Nucleophile in catalysis. A disulfide bond links cysteine 94 and cysteine 188. Glycine 118 is an ATP binding site. An interaction with tRNA region spans residues 136 to 138 (KDQ). Cysteine 188 (cysteine persulfide intermediate) is an active-site residue. An interaction with tRNA region spans residues 290–291 (RY).

Belongs to the MnmA/TRMU family.

The protein resides in the cytoplasm. It catalyses the reaction S-sulfanyl-L-cysteinyl-[protein] + uridine(34) in tRNA + AH2 + ATP = 2-thiouridine(34) in tRNA + L-cysteinyl-[protein] + A + AMP + diphosphate + H(+). Its function is as follows. Catalyzes the 2-thiolation of uridine at the wobble position (U34) of tRNA, leading to the formation of s(2)U34. This is tRNA-specific 2-thiouridylase MnmA from Nitratiruptor sp. (strain SB155-2).